A 373-amino-acid chain; its full sequence is Peptide chain release factor 2 (373 aa).

An N5-methylglutamine modification is found at Gln252.

It belongs to the prokaryotic/mitochondrial release factor family. In terms of processing, methylated by PrmC. Methylation increases the termination efficiency of RF2.

The protein localises to the cytoplasm. In terms of biological role, peptide chain release factor 2 directs the termination of translation in response to the peptide chain termination codons UGA and UAA. This chain is Peptide chain release factor 2, found in Staphylococcus saprophyticus subsp. saprophyticus (strain ATCC 15305 / DSM 20229 / NCIMB 8711 / NCTC 7292 / S-41).